A 299-amino-acid polypeptide reads, in one-letter code: Protease HtpX homolog (299 aa).

The next 2 helical transmembrane spans lie at Leu19–Phe39 and Trp41–Tyr61. His146 is a Zn(2+) binding site. Glu147 is a catalytic residue. A Zn(2+)-binding site is contributed by His150. A run of 2 helical transmembrane segments spans residues Ile156 to Phe176 and Ile198 to Ile218. Glu227 provides a ligand contact to Zn(2+).

Belongs to the peptidase M48B family. Zn(2+) is required as a cofactor.

The protein localises to the cell membrane. The sequence is that of Protease HtpX homolog from Caldanaerobacter subterraneus subsp. tengcongensis (strain DSM 15242 / JCM 11007 / NBRC 100824 / MB4) (Thermoanaerobacter tengcongensis).